The primary structure comprises 1161 residues: Lysine-specific demethylase 2A (1161 aa).

At Ser-28 the chain carries Phosphoserine. Residues 148–316 enclose the JmjC domain; it reads FSHTRLENMV…MQLKIYSIED (169 aa). Thr-209 provides a ligand contact to substrate. His-212 and Asp-214 together coordinate Fe cation. Position 229 (Lys-229) interacts with substrate. His-284 provides a ligand contact to Fe cation. Phosphoserine is present on residues Ser-390 and Ser-394. The span at 419-433 shows a compositional bias: low complexity; it reads KTLSGDSSSDSTRGS. The interval 419–445 is disordered; sequence KTLSGDSSSDSTRGSHNGQVWDPQCSP. Residue Ser-444 is modified to Phosphoserine. Lys-505 is covalently cross-linked (Glycyl lysine isopeptide (Lys-Gly) (interchain with G-Cter in SUMO2)). The tract at residues 532–557 is disordered; that stretch reads VPTIPITKPHTMKPAPRLTPVRPAAA. Thr-550 carries the phosphothreonine modification. Ser-558 is modified (phosphoserine). The CXXC-type zinc-finger motif lies at 564 to 610; that stretch reads ARRRRVRCRKCKACVQGECGVCHYCRDMKKFGGPGRMKQSCVLRQCL. 10 residues coordinate Zn(2+): Cys-571, Cys-574, Cys-577, Cys-582, Cys-585, Cys-588, Cys-604, Cys-609, Cys-620, and Cys-623. A PHD-type zinc finger spans residues 617-678; that stretch reads SVTCSLCGEV…CWECPKCYQE (62 aa). At Thr-632 the chain carries Phosphothreonine. Zn(2+) contacts are provided by Cys-642, Cys-645, His-650, Cys-653, Cys-672, and Cys-675. At Ser-692 the chain carries Phosphoserine. The segment at 705–789 is disordered; that stretch reads LRSCEEPLTP…PSGKKELSEV (85 aa). Thr-713 is modified (phosphothreonine). Residues Ser-718 and Ser-731 each carry the phosphoserine modification. 2 stretches are compositionally biased toward basic and acidic residues: residues 746–757 and 771–789; these read SDHHSASRDERF and TMVREKENNPSGKKELSEV. A phosphoserine mark is found at Ser-825, Ser-868, and Ser-882. The interval 840–886 is disordered; sequence CPARNPQHGDEEGLGGEEEEEEEEEEDDSAEEGGAARLNGRGSWAQD. Residues 851–870 show a composition bias toward acidic residues; that stretch reads EGLGGEEEEEEEEEEDDSAE. In terms of domain architecture, F-box spans 888 to 935; it reads DESWMQREVWMSVFRYLSRKELCECMRVCKTWYKWCCDKRLWTKIDLS. LRR repeat units lie at residues 960 to 981 and 983 to 1009; these read WTNISKKQLTWLVNRLPGLKDL and LAGCSWSAVSALSTSSCPLLRTLDLRW. Arg-1019 carries the ADP-ribosylarginine modification. 4 LRR repeats span residues 1047–1072, 1073–1102, 1103–1127, and 1128–1155; these read GLDITDATLRLIIRHMPLLSRLDLSH, CSHLTDQSSNLLTAVGSSTRYSLTELNMAG, CNKLTDQTLFFLRRIANVTLIDLRG, and CKQITRKACEHFISDLSINSLYCLSDEK.

It belongs to the JHDM1 histone demethylase family. As to quaternary structure, part of a SCF (SKP1-cullin-F-box) protein ligase complex. Interacts with CBX5/HP1A; the interaction promotes CBX5 localization to chromatin. The SKP1-KDM2A complex interacts with UBB. The cofactor is Fe(2+). Mono-ADP-ribosylated at Arg-1019 in response to DNA damage, leading to displacement from chromatin, resulting in increased dimethylation of histone H3 at 'Lys-36'.

It localises to the nucleus. The protein resides in the nucleoplasm. The protein localises to the chromosome. It carries out the reaction N(6),N(6)-dimethyl-L-lysyl(36)-[histone H3] + 2 2-oxoglutarate + 2 O2 = L-lysyl(36)-[histone H3] + 2 formaldehyde + 2 succinate + 2 CO2. Functionally, histone demethylase that specifically demethylates 'Lys-36' of histone H3, thereby playing a central role in histone code. Preferentially demethylates dimethylated H3 'Lys-36' residue while it has weak or no activity for mono- and tri-methylated H3 'Lys-36'. May also recognize and bind to some phosphorylated proteins and promote their ubiquitination and degradation. Required to maintain the heterochromatic state. Associates with centromeres and represses transcription of small non-coding RNAs that are encoded by the clusters of satellite repeats at the centromere. Required to sustain centromeric integrity and genomic stability, particularly during mitosis. Regulates circadian gene expression by repressing the transcriptional activator activity of CLOCK-BMAL1 heterodimer and RORA in a catalytically-independent manner. This is Lysine-specific demethylase 2A (Kdm2a) from Mus musculus (Mouse).